Consider the following 354-residue polypeptide: Guanine nucleotide-binding protein G(i) subunit alpha (354 aa).

Gly2 is lipidated: N-myristoyl glycine. The S-palmitoyl cysteine moiety is linked to residue Cys3. The region spanning 32-354 (REVKLLLLGA…KNNLKDCGLF (323 aa)) is the G-alpha domain. The tract at residues 35–48 (KLLLLGAGESGKST) is G1 motif. GTP-binding positions include 40 to 47 (GAGESGKS), 175 to 181 (LRTRVKT), 200 to 204 (DVGGQ), 269 to 272 (NKKD), and Ala326. Mg(2+) contacts are provided by Ser47 and Thr181. A G2 motif region spans residues 173–181 (DVLRTRVKT). The tract at residues 196–205 (FKMFDVGGQR) is G3 motif. Residues 265–272 (ILFLNKKD) are G4 motif. Residues 324–329 (TCATDT) are G5 motif.

Belongs to the G-alpha family. G(i/o/t/z) subfamily. As to quaternary structure, g proteins are composed of 3 units; alpha, beta and gamma. The alpha chain contains the guanine nucleotide binding site.

Functionally, guanine nucleotide-binding proteins (G proteins) are involved as modulators or transducers in various transmembrane signaling systems. The G(i) proteins are involved in hormonal regulation of adenylate cyclase: they inhibit the cyclase in response to beta-adrenergic stimuli. The protein is Guanine nucleotide-binding protein G(i) subunit alpha of Lymnaea stagnalis (Great pond snail).